The sequence spans 184 residues: uncharacterized protein (184 aa).

Positions 36 to 164 (LRHRATYIVV…TPDSLKALAL (129 aa)) constitute a Nudix hydrolase domain. Positions 73 to 95 (GGVVQADEQLLESARREAEEELG) match the Nudix box motif. The Mg(2+) site is built by Glu-89 and Glu-93.

The protein belongs to the Nudix hydrolase family. Mg(2+) serves as cofactor.

This is an uncharacterized protein from Salmonella typhi.